The following is a 265-amino-acid chain: Cell adhesion molecule CEACAM10 (265 aa).

The first 33 residues, 1 to 33 (MELASAHLHKGQVPWVGLLLTASLLTYWSPATT), serve as a signal peptide directing secretion. 2 Ig-like V-type domains span residues 35–142 (QVTV…HVHP) and 155–262 (QVTV…NVHA). 3 N-linked (GlcNAc...) asparagine glycosylation sites follow: N44, N87, and N224.

Belongs to the immunoglobulin superfamily. CEA family. In terms of tissue distribution, abundant in seminal vesicle and traces in epididymis and prostate (at protein level). Highly expressed in seminal vesicle, minor in colon and placenta and, to a lesser extent, in small intestine, caecum, stomach, salivary gland and bone marrow.

It is found in the secreted. It localises to the extracellular space. Functionally, may interact with other CEACAM proteins on the sperm surface. The sequence is that of Cell adhesion molecule CEACAM10 from Mus musculus (Mouse).